Consider the following 315-residue polypeptide: Protoheme IX farnesyltransferase 1 (315 aa).

9 helical membrane passes run P25–G45, L49–V69, R87–G107, A120–L139, S145–C165, A176–F196, L220–G240, T242–L262, and G280–I300.

The protein belongs to the UbiA prenyltransferase family. Protoheme IX farnesyltransferase subfamily.

Its subcellular location is the cell inner membrane. It carries out the reaction heme b + (2E,6E)-farnesyl diphosphate + H2O = Fe(II)-heme o + diphosphate. It functions in the pathway porphyrin-containing compound metabolism; heme O biosynthesis; heme O from protoheme: step 1/1. In terms of biological role, converts heme B (protoheme IX) to heme O by substitution of the vinyl group on carbon 2 of heme B porphyrin ring with a hydroxyethyl farnesyl side group. In Shewanella sp. (strain W3-18-1), this protein is Protoheme IX farnesyltransferase 1.